The chain runs to 516 residues: 2-isopropylmalate synthase (516 aa).

Residues 5–267 (VIIFDTTLRD…STNIVHKEIY (263 aa)) form the Pyruvate carboxyltransferase domain. D14, H202, H204, and N238 together coordinate Mn(2+). Residues 392-516 (YLKFFSVQSI…NKKLKNLKKY (125 aa)) are regulatory domain.

The protein belongs to the alpha-IPM synthase/homocitrate synthase family. LeuA type 1 subfamily. Homodimer. The cofactor is Mn(2+).

The protein localises to the cytoplasm. It catalyses the reaction 3-methyl-2-oxobutanoate + acetyl-CoA + H2O = (2S)-2-isopropylmalate + CoA + H(+). It functions in the pathway amino-acid biosynthesis; L-leucine biosynthesis; L-leucine from 3-methyl-2-oxobutanoate: step 1/4. Its function is as follows. Catalyzes the condensation of the acetyl group of acetyl-CoA with 3-methyl-2-oxobutanoate (2-ketoisovalerate) to form 3-carboxy-3-hydroxy-4-methylpentanoate (2-isopropylmalate). The protein is 2-isopropylmalate synthase of Buchnera aphidicola subsp. Diuraphis noxia.